The chain runs to 76 residues: Protein RALF-like 30 (76 aa).

Residues 1–22 form the signal peptide; it reads MKAWVICLMVISIFMMIEPTLA. 2 disulfide bridges follow: Cys-37-Cys-46 and Cys-66-Cys-72.

It belongs to the plant rapid alkalinization factor (RALF) family.

It is found in the secreted. Cell signaling peptide that may regulate plant stress, growth, and development. Mediates a rapid alkalinization of extracellular space by mediating a transient increase in the cytoplasmic Ca(2+) concentration leading to a calcium-dependent signaling events through a cell surface receptor and a concomitant activation of some intracellular mitogen-activated protein kinases. The protein is Protein RALF-like 30 (RALFL30) of Arabidopsis thaliana (Mouse-ear cress).